The chain runs to 175 residues: Adenine phosphoribosyltransferase (175 aa).

Belongs to the purine/pyrimidine phosphoribosyltransferase family. As to quaternary structure, homodimer.

The protein localises to the cytoplasm. It catalyses the reaction AMP + diphosphate = 5-phospho-alpha-D-ribose 1-diphosphate + adenine. It functions in the pathway purine metabolism; AMP biosynthesis via salvage pathway; AMP from adenine: step 1/1. Functionally, catalyzes a salvage reaction resulting in the formation of AMP, that is energically less costly than de novo synthesis. The protein is Adenine phosphoribosyltransferase of Clavibacter michiganensis subsp. michiganensis (strain NCPPB 382).